The sequence spans 102 residues: Protein YcgL (102 aa).

The 85-residue stretch at 14-98 folds into the YcgL domain; sequence MFCVIYRSSK…PPEDLLKQHL (85 aa).

In Salmonella agona (strain SL483), this protein is Protein YcgL.